A 249-amino-acid chain; its full sequence is uncharacterized protein (249 aa).

The S4 RNA-binding domain occupies 7–64 (PRVHVFLAEKGVGSRRFCEELIRKKLVRVNNTIAKLGDKVTLGDRIIYKKQIFVFKDF). D112 (nucleophile) is an active-site residue.

Belongs to the pseudouridine synthase RsuA family.

It carries out the reaction a uridine in RNA = a pseudouridine in RNA. This is an uncharacterized protein from Borreliella burgdorferi (strain ATCC 35210 / DSM 4680 / CIP 102532 / B31) (Borrelia burgdorferi).